Here is a 61-residue protein sequence, read N- to C-terminus: UPF0337 protein LMOf2365_2190 (61 aa).

The tract at residues 1–61 (MSEDKGMKDK…TGDAKKKLSE (61 aa)) is disordered.

Belongs to the UPF0337 (CsbD) family.

This is UPF0337 protein LMOf2365_2190 from Listeria monocytogenes serotype 4b (strain F2365).